Here is a 201-residue protein sequence, read N- to C-terminus: Small ribosomal subunit protein uS4c (201 aa).

Positions 20–44 (GLTSKRPRAGSDLRNQSRSGKKSQY) are disordered. The 64-residue stretch at 89–152 (MRLDNILFRL…NSRTLVQNLL (64 aa)) folds into the S4 RNA-binding domain.

It belongs to the universal ribosomal protein uS4 family. Part of the 30S ribosomal subunit. Contacts protein S5. The interaction surface between S4 and S5 is involved in control of translational fidelity.

Its subcellular location is the plastid. It localises to the chloroplast. Functionally, one of the primary rRNA binding proteins, it binds directly to 16S rRNA where it nucleates assembly of the body of the 30S subunit. With S5 and S12 plays an important role in translational accuracy. The chain is Small ribosomal subunit protein uS4c (rps4) from Arabis hirsuta (Hairy rock-cress).